Reading from the N-terminus, the 210-residue chain is Synaptosomal-associated protein 25 (210 aa).

Positions 1–23 are disordered; the sequence is MENSVENSMDPRSEQEEMQRCAD. A compositionally biased stretch (basic and acidic residues) spans 9-20; sequence MDPRSEQEEMQR. T-SNARE coiled-coil homology domains lie at 23-85 and 147-209; these read DQIT…LSDL and DARE…ATKM.

The protein belongs to the SNAP-25 family.

The protein resides in the synapse. It localises to the synaptosome. It is found in the cell membrane. Functionally, may play an important role in the synaptic function of specific neuronal systems. Associates with proteins involved in vesicle docking and membrane fusion. The sequence is that of Synaptosomal-associated protein 25 (snap25) from Torpedo marmorata (Marbled electric ray).